The following is a 1238-amino-acid chain: Lysine-specific demethylase JMJ703 (1238 aa).

The interval E56–C79 is disordered. Residues A62–C79 show a composition bias toward polar residues. Positions A154–P195 constitute a JmjN domain. The interval K215–P266 is disordered. Residues N221 to K238 are compositionally biased toward basic residues. A compositionally biased stretch (polar residues) spans N245–P259. In terms of domain architecture, JmjC spans K348–R514. Fe cation contacts are provided by H394, E396, and H482. Disordered stretches follow at residues G699–E725, Y777–S798, T834–E863, and A910–T978. The segment covering S706–S719 has biased composition (low complexity). Residues A910–Q923 show a composition bias toward polar residues. Residues S924–A936 are compositionally biased toward low complexity. The segment covering S964–T978 has biased composition (polar residues). Residues V1019–A1077 form the FYR N-terminal domain. In terms of domain architecture, FYR C-terminal spans M1079 to R1169.

The cofactor is Fe(2+). Expressed in roots, leaf sheaths, stems and panicles.

Its subcellular location is the nucleus. It carries out the reaction N(6),N(6),N(6)-trimethyl-L-lysyl(4)-[histone H3] + 3 2-oxoglutarate + 3 O2 = L-lysyl(4)-[histone H3] + 3 formaldehyde + 3 succinate + 3 CO2. Its function is as follows. Histone demethylase that demethylates 'Lys-4' (H3K4me) of histone H3 with a specific activity for H3K4me3, H3K4me2 and H3K4me1. No activity on H3K9me3/2/1, H3K27me3/2/1 and H3K36me3/2/1. Involved in the control of stem elongation by regulating methylation states of H3K4me3 on cytokinin oxidase (CKX) gene family, which may cause increased expression of CKX genes and reduced cytokinin levels. Prevents ectopic retrotransposition by regulating the levels of H3K4me3 in two non-LTR retrotransposons KARMA and LINE-1 (L1) and reinforcing their repressed states. This chain is Lysine-specific demethylase JMJ703 (JMJ703), found in Oryza sativa subsp. japonica (Rice).